A 340-amino-acid chain; its full sequence is Myb-related protein Zm1 (340 aa).

HTH myb-type domains are found at residues 11–63 and 64–118; these read KVGL…INYL and RPDL…KKKV. 2 DNA-binding regions (H-T-H motif) span residues 39–63 and 91–114; these read WRAL…INYL and WSKI…NTHL. Residues 116 to 126 are compositionally biased toward basic residues; sequence KKVAQREKKKA. Disordered regions lie at residues 116–173 and 190–209; these read KKVA…DATD and DGAP…SSLT. Residues 133 to 166 are compositionally biased toward low complexity; sequence AGTPATAPLSSATSSTTTHNSSGGSDSGDQCGTS.

It is found in the nucleus. Its function is as follows. Transcription factor that positively regulates genes involved in anthocyanin biosynthesis such as A1. The protein is Myb-related protein Zm1 of Zea mays (Maize).